The primary structure comprises 470 residues: Pyruvate kinase I (470 aa).

Residue Arg-32 coordinates substrate. Residues Asn-34, Ser-36, Asp-66, and Thr-67 each coordinate K(+). 34–37 (NFSH) lines the ATP pocket. ATP contacts are provided by Arg-73 and Lys-156. Lys-220 provides a ligand contact to substrate. Residue Glu-222 participates in Mg(2+) binding. 3 residues coordinate substrate: Gly-245, Asp-246, and Thr-278. Residue Asp-246 coordinates Mg(2+).

Belongs to the pyruvate kinase family. In terms of assembly, homotetramer. Mg(2+) serves as cofactor. K(+) is required as a cofactor.

The catalysed reaction is pyruvate + ATP = phosphoenolpyruvate + ADP + H(+). It participates in carbohydrate degradation; glycolysis; pyruvate from D-glyceraldehyde 3-phosphate: step 5/5. With respect to regulation, belongs to type I PK; fructose 1,6-bisphosphate-activated. Its function is as follows. Catalyzes the formation of pyruvate in the last step of glycolysis, it is irreversible under physiological conditions. The reaction is critical for the control of metabolic flux in the second part of glycolysis. In Salmonella typhimurium (strain LT2 / SGSC1412 / ATCC 700720), this protein is Pyruvate kinase I (pykF).